A 400-amino-acid chain; its full sequence is CCA-adding enzyme (400 aa).

2 residues coordinate ATP: G28 and R31. CTP is bound by residues G28 and R31. 2 residues coordinate Mg(2+): D41 and D43. Residues R112, D155, R158, R161, and R164 each contribute to the ATP site. The CTP site is built by R112, D155, R158, R161, and R164.

This sequence belongs to the tRNA nucleotidyltransferase/poly(A) polymerase family. Bacterial CCA-adding enzyme type 3 subfamily. In terms of assembly, homodimer. Requires Mg(2+) as cofactor.

The enzyme catalyses a tRNA precursor + 2 CTP + ATP = a tRNA with a 3' CCA end + 3 diphosphate. It catalyses the reaction a tRNA with a 3' CCA end + 2 CTP + ATP = a tRNA with a 3' CCACCA end + 3 diphosphate. Functionally, catalyzes the addition and repair of the essential 3'-terminal CCA sequence in tRNAs without using a nucleic acid template. Adds these three nucleotides in the order of C, C, and A to the tRNA nucleotide-73, using CTP and ATP as substrates and producing inorganic pyrophosphate. tRNA 3'-terminal CCA addition is required both for tRNA processing and repair. Also involved in tRNA surveillance by mediating tandem CCA addition to generate a CCACCA at the 3' terminus of unstable tRNAs. While stable tRNAs receive only 3'-terminal CCA, unstable tRNAs are marked with CCACCA and rapidly degraded. In Staphylococcus aureus (strain bovine RF122 / ET3-1), this protein is CCA-adding enzyme.